A 598-amino-acid chain; its full sequence is Arylsulfate sulfotransferase AssT (598 aa).

Positions 1-27 (MFHPYRKTLLSGTVALALGLFATGAIA) are cleaved as a signal peptide. 4-methylumbelliferone contacts are provided by His279 and His383. The cysteines at positions 445 and 451 are disulfide-linked. 4-methylumbelliferone is bound at residue His463. Residue His463 is the Nucleophile; sulfurylated histidine covalent intermediate of the active site.

Belongs to the aryl sulfotransferase family. In terms of assembly, monomer.

The protein localises to the periplasm. It carries out the reaction an aryl sulfate + a phenol = an aryl sulfate + a phenol. The catalysed reaction is 4-methylumbelliferone sulfate + phenol = phenyl sulfate + 4-methylumbelliferone. It catalyses the reaction 2-naphthyl sulfate + phenol = phenyl sulfate + 2-naphthol. In terms of biological role, catalyzes the transfer of a sulfate group from a phenyl sulfate ester to other phenolic compounds. Is able to use several substrate donors and acceptors in vitro: using phenol as an acceptor substrate, 4-methylumbelliferyl sulfate is the best donor substrate, followed by beta-naphthyl sulfate, p-nitrophenyl sulfate (PNS), and alpha-naphthyl sulfate; using PNS as a donor substrate, alpha-naphthol is the best acceptor substrate, followed by phenol, resorcinol, p-acetaminophen, tyramine, and tyrosine. Cannot use 3'-phosphoadenosine-5'-phophosulfate (PAPS), the donor substrate of mammalian sulfotransferase. May be a detoxifying enzyme, converting toxic phenolic compounds into non-toxic materials. This chain is Arylsulfate sulfotransferase AssT, found in Lelliottia amnigena (Enterobacter amnigenus).